A 661-amino-acid polypeptide reads, in one-letter code: Kininogen-1 (661 aa).

A signal peptide spans 1–20 (MKLITTLLLCSGLLLTLTQG). Positions 28–131 (CNDEAVFQAV…TQTCKIAPSK (104 aa)) constitute a Cystatin kininogen-type 1 domain. Intrachain disulfides connect cysteine 28–cysteine 631, cysteine 83–cysteine 94, cysteine 107–cysteine 125, cysteine 141–cysteine 144, cysteine 205–cysteine 217, cysteine 228–cysteine 247, cysteine 263–cysteine 266, cysteine 327–cysteine 339, and cysteine 350–cysteine 369. An N-linked (GlcNAc...) asparagine glycan is attached at asparagine 82. The Cystatin kininogen-type 2 domain maps to 150-253 (TDSPDLEPVL…SQSCTLYSGD (104 aa)). Residues asparagine 168 and asparagine 204 are each glycosylated (N-linked (GlcNAc...) asparagine). An N-linked (GlcNAc...) asparagine glycan is attached at asparagine 242. Residues 272–375 (VDSPELKEVL…TVKCQALDMT (104 aa)) form the Cystatin kininogen-type 3 domain. Position 331 is a phosphoserine (serine 331). Disordered regions lie at residues 405 to 471 (YIAR…LGHG), 485 to 583 (DGDD…FQDS), and 626 to 661 (ATSP…DALS). Basic residues-rich tracts occupy residues 434–471 (KANK…LGHG) and 492–526 (TVGH…HGKH). Over residues 541-555 (TESLASSSEYSTTST) the composition is skewed to low complexity. The span at 650–661 (EFSDFDLLDALS) shows a compositional bias: acidic residues.

As to quaternary structure, isoform LMW interacts with CRISP3. Post-translationally, bradykinin is released from kininogen by plasma kallikrein. In terms of processing, phosphorylated by FAM20C in the extracellular medium. Bradykinin is inactivated by ACE, which removes the dipeptide Arg-Phe from its C-terminus. Plasma.

The protein resides in the secreted. Its subcellular location is the extracellular space. In terms of biological role, kininogens are inhibitors of thiol proteases. HMW-kininogen plays an important role in blood coagulation by helping to position optimally prekallikrein and factor XI next to factor XII; HMW-kininogen inhibits the thrombin- and plasmin-induced aggregation of thrombocytes. LMW-kininogen inhibits the aggregation of thrombocytes. LMW-kininogen is in contrast to HMW-kininogen not involved in blood clotting. Functionally, the active peptide bradykinin is a potent vasodilatator that is released from HMW-kininogen shows a variety of physiological effects: (A) influence in smooth muscle contraction, (B) induction of hypotension, (C) natriuresis and diuresis, (D) decrease in blood glucose level, (E) it is a mediator of inflammation and causes (E1) increase in vascular permeability, (E2) stimulation of nociceptors (4E3) release of other mediators of inflammation (e.g. prostaglandins), (F) it has a cardioprotective effect (directly via bradykinin action, indirectly via endothelium-derived relaxing factor action). The protein is Kininogen-1 (Kng1) of Mus musculus (Mouse).